A 134-amino-acid chain; its full sequence is Small ribosomal subunit protein uS11 (134 aa).

Belongs to the universal ribosomal protein uS11 family. Part of the 30S ribosomal subunit. Interacts with proteins S7 and S18. Binds to IF-3.

Functionally, located on the platform of the 30S subunit, it bridges several disparate RNA helices of the 16S rRNA. Forms part of the Shine-Dalgarno cleft in the 70S ribosome. In Frankia alni (strain DSM 45986 / CECT 9034 / ACN14a), this protein is Small ribosomal subunit protein uS11.